The chain runs to 164 residues: UPF0304 protein Asuc_0543 (164 aa).

The protein belongs to the UPF0304 family.

This chain is UPF0304 protein Asuc_0543, found in Actinobacillus succinogenes (strain ATCC 55618 / DSM 22257 / CCUG 43843 / 130Z).